The sequence spans 500 residues: Flt3-interacting zinc finger protein 1 (500 aa).

Met-1 is subject to N-acetylmethionine. The disordered stretch occupies residues 1–24; it reads MEDSSLPVVPAPIAAPGPAPSATA. Positions 9-19 are enriched in pro residues; it reads VPAPIAAPGPA. C2H2-type zinc fingers lie at residues 29–51, 57–79, 85–107, 113–136, 204–226, and 232–254; these read FHCS…FARH, HACP…LRSH, YRCS…QVVH, YCCL…KRQH, FACG…WAAH, and FKCP…KLTH. Disordered regions lie at residues 255-284 and 306-328; these read DLQG…ASEV and KLEA…AAAE. Residues 256–267 show a composition bias toward polar residues; the sequence is LQGSNAPPTQVW. 5 consecutive C2H2-type zinc fingers follow at residues 336-357, 363-386, 418-440, 446-468, and 474-496; these read YQCD…LEAH, YGCG…RASH, FGCS…VLVH, FPCL…RLLH, and FPCH…LKLH. The tract at residues 383–415 is disordered; it reads RASHGEGSGEAAPDGEGNQAAGGPGPGSSSRSK.

Interacts with FLT3 cytoplasmic catalytic domain, following receptor stimulation, in a kinase-independent manner. Does not interact with other structurally related receptor tyrosine kinases, including KIT, CSF1R and PDGFR. Interacts with NRL. Widely expressed. In the retina, highest expression in the ganglion cell layer.

It localises to the cytoplasm. The protein localises to the nucleus. May be a transcriptional repressor of NRL function in photoreceptors. Does not repress CRX-mediated transactivation. This Mus musculus (Mouse) protein is Flt3-interacting zinc finger protein 1 (Fiz1).